The following is an 838-amino-acid chain: Periplasmic nitrate reductase (838 aa).

Residues 1–29 constitute a signal peptide (tat-type signal); sequence MDMSRRTLLKAQAAAAAAAVAGIDLPAEA. The 57-residue stretch at 40–96 folds into the 4Fe-4S Mo/W bis-MGD-type domain; that stretch reads LKWSKAPCRFCGTGCGVMVGVKDGRVVATHGDMQAEVNRGLNCVKGYFLSKIMYGAD. [4Fe-4S] cluster-binding residues include Cys-47, Cys-50, Cys-54, and Cys-82. Mo-bis(molybdopterin guanine dinucleotide) is bound by residues Lys-84, Gln-151, Asn-176, Cys-180, 213-220, 244-248, 263-265, Met-374, Gln-378, Asn-484, 510-511, Lys-533, Asp-560, and 720-729; these read WGSNMAEM, STYEH, GTD, SD, and TGRVLEHWHS. Substrate is bound at residue Phe-796. Positions 804 and 821 each coordinate Mo-bis(molybdopterin guanine dinucleotide).

It belongs to the prokaryotic molybdopterin-containing oxidoreductase family. NasA/NapA/NarB subfamily. Component of the periplasmic nitrate reductase NapAB complex composed of NapA and NapB. Requires [4Fe-4S] cluster as cofactor. Mo-bis(molybdopterin guanine dinucleotide) serves as cofactor. In terms of processing, predicted to be exported by the Tat system. The position of the signal peptide cleavage has not been experimentally proven.

The protein resides in the periplasm. The enzyme catalyses 2 Fe(II)-[cytochrome] + nitrate + 2 H(+) = 2 Fe(III)-[cytochrome] + nitrite + H2O. Catalytic subunit of the periplasmic nitrate reductase complex NapAB. Receives electrons from NapB and catalyzes the reduction of nitrate to nitrite. The protein is Periplasmic nitrate reductase of Methylobacterium sp. (strain 4-46).